We begin with the raw amino-acid sequence, 538 residues long: Phosphoenolpyruvate carboxykinase (ATP) (538 aa).

Residues R64, Y205, and K211 each coordinate substrate. Residues K211, H230, and 246 to 254 (GLSGTGKTT) each bind ATP. Mn(2+)-binding residues include K211 and H230. A Mn(2+)-binding site is contributed by D267. ATP contacts are provided by residues E295, R331, 447–448 (RI), and T453. Residue R331 participates in substrate binding.

It belongs to the phosphoenolpyruvate carboxykinase (ATP) family. Monomer. Requires Mn(2+) as cofactor.

It localises to the cytoplasm. The catalysed reaction is oxaloacetate + ATP = phosphoenolpyruvate + ADP + CO2. It participates in carbohydrate biosynthesis; gluconeogenesis. Involved in the gluconeogenesis. Catalyzes the conversion of oxaloacetate (OAA) to phosphoenolpyruvate (PEP) through direct phosphoryl transfer between the nucleoside triphosphate and OAA. The protein is Phosphoenolpyruvate carboxykinase (ATP) of Haemophilus influenzae (strain PittEE).